We begin with the raw amino-acid sequence, 322 residues long: 4-diphosphocytidyl-2-C-methyl-D-erythritol kinase (322 aa).

Lysine 25 is an active-site residue. 110 to 120 (PVAGGMAGGSA) serves as a coordination point for ATP. The active site involves aspartate 152.

It belongs to the GHMP kinase family. IspE subfamily.

The catalysed reaction is 4-CDP-2-C-methyl-D-erythritol + ATP = 4-CDP-2-C-methyl-D-erythritol 2-phosphate + ADP + H(+). The protein operates within isoprenoid biosynthesis; isopentenyl diphosphate biosynthesis via DXP pathway; isopentenyl diphosphate from 1-deoxy-D-xylulose 5-phosphate: step 3/6. In terms of biological role, catalyzes the phosphorylation of the position 2 hydroxy group of 4-diphosphocytidyl-2C-methyl-D-erythritol. The protein is 4-diphosphocytidyl-2-C-methyl-D-erythritol kinase of Mycolicibacterium vanbaalenii (strain DSM 7251 / JCM 13017 / BCRC 16820 / KCTC 9966 / NRRL B-24157 / PYR-1) (Mycobacterium vanbaalenii).